Here is a 349-residue protein sequence, read N- to C-terminus: Anthranilate phosphoribosyltransferase (349 aa).

5-phospho-alpha-D-ribose 1-diphosphate-binding positions include G82, 85 to 86 (GD), 92 to 95 (NVST), 110 to 118 (KHGNRAVSG), and S122. G82 lines the anthranilate pocket. S94 is a Mg(2+) binding site. N113 is a binding site for anthranilate. Residue R168 coordinates anthranilate. Mg(2+) contacts are provided by D227 and E228.

The protein belongs to the anthranilate phosphoribosyltransferase family. As to quaternary structure, homodimer. Requires Mg(2+) as cofactor.

The enzyme catalyses N-(5-phospho-beta-D-ribosyl)anthranilate + diphosphate = 5-phospho-alpha-D-ribose 1-diphosphate + anthranilate. The protein operates within amino-acid biosynthesis; L-tryptophan biosynthesis; L-tryptophan from chorismate: step 2/5. In terms of biological role, catalyzes the transfer of the phosphoribosyl group of 5-phosphorylribose-1-pyrophosphate (PRPP) to anthranilate to yield N-(5'-phosphoribosyl)-anthranilate (PRA). The protein is Anthranilate phosphoribosyltransferase of Pseudomonas fluorescens (strain Pf0-1).